The sequence spans 513 residues: Xylose import ATP-binding protein XylG (513 aa).

ABC transporter domains follow at residues 5–242 (LEMK…VGRE) and 259–505 (LRVE…LRSE). 37-44 (GENGSGKS) is a binding site for ATP.

The protein belongs to the ABC transporter superfamily. Xylose importer (TC 3.A.1.2.4) family. The complex is composed of two ATP-binding proteins (XylG), two transmembrane proteins (XylH) and a solute-binding protein (XylF).

The protein localises to the cell inner membrane. The enzyme catalyses D-xylose(out) + ATP + H2O = D-xylose(in) + ADP + phosphate + H(+). Functionally, part of the ABC transporter complex XylFGH involved in xylose import. Responsible for energy coupling to the transport system. This is Xylose import ATP-binding protein XylG from Pectobacterium atrosepticum (strain SCRI 1043 / ATCC BAA-672) (Erwinia carotovora subsp. atroseptica).